The sequence spans 628 residues: Basal cell adhesion molecule (628 aa).

Positions Met1–Ala31 are cleaved as a signal peptide. 2 consecutive Ig-like V-type domains span residues Glu32–Lys142 and Pro150–Gly253. Topologically, residues Glu32 to Ala547 are extracellular. 3 disulfide bridges follow: Cys53–Cys125, Cys172–Cys237, and Cys291–Cys337. 3 Ig-like C2-type domains span residues Pro254–Glu355, Glu355–Arg441, and Pro448–Gly538. N-linked (GlcNAc...) asparagine glycans are attached at residues Asn321, Asn330, and Asn378. 2 cysteine pairs are disulfide-bonded: Cys384-Cys424 and Cys473-Cys522. Residues Gly548–Phe568 traverse the membrane as a helical segment. Topologically, residues Tyr569–Cys628 are cytoplasmic. The tract at residues Cys580–Cys628 is disordered. Ser596, Ser598, Ser600, and Ser621 each carry phosphoserine. Positions Ala613–Cys628 are enriched in gly residues.

In terms of assembly, homodimer. Interacts with ITGA4:ITGB1. Interacts with spectrins SPTA1 and SPTB1. Epinephrine-stimulated phosphorylation of Ser-621 by PKA enhances adhesion to laminin. Ser-621 can also be phosphorylated by AKT1.

It localises to the cell membrane. Transmembrane glycoprotein that functions as both a receptor and an adhesion molecule playing a crucial role in cell adhesion, motility, migration and invasion. Extracellular domain enables binding to extracellular matrix proteins, such as laminin, integrin and other ligands while its intracellular domain interacts with cytoskeletal proteins like hemoglobin, facilitating cell signal transduction. Serves as a receptor for laminin alpha-5/LAMA5 to promote cell adhesion. Mechanistically, JAK2 induces BCAM phosphorylation and activates its adhesion to laminin by stimulating a Rap1/AKT signaling pathway in the absence of EPOR. This chain is Basal cell adhesion molecule (BCAM), found in Bos taurus (Bovine).